The primary structure comprises 328 residues: Ketol-acid reductoisomerase (NADP(+)) (328 aa).

The KARI N-terminal Rossmann domain occupies 2 to 181 (AKIYRETDAD…GFTRVGVIET (180 aa)). NADP(+) is bound by residues 25–28 (YGIQ), Arg-48, Ser-52, and 82–85 (DMVQ). His-107 is a catalytic residue. NADP(+) is bound at residue Gly-133. One can recognise a KARI C-terminal knotted domain in the interval 182 to 327 (TFAEETETDL…EDLRRLMRSG (146 aa)). Asp-190, Glu-194, Glu-226, and Glu-230 together coordinate Mg(2+). Ser-251 contributes to the substrate binding site.

Belongs to the ketol-acid reductoisomerase family. Mg(2+) is required as a cofactor.

It catalyses the reaction (2R)-2,3-dihydroxy-3-methylbutanoate + NADP(+) = (2S)-2-acetolactate + NADPH + H(+). The enzyme catalyses (2R,3R)-2,3-dihydroxy-3-methylpentanoate + NADP(+) = (S)-2-ethyl-2-hydroxy-3-oxobutanoate + NADPH + H(+). It functions in the pathway amino-acid biosynthesis; L-isoleucine biosynthesis; L-isoleucine from 2-oxobutanoate: step 2/4. The protein operates within amino-acid biosynthesis; L-valine biosynthesis; L-valine from pyruvate: step 2/4. In terms of biological role, involved in the biosynthesis of branched-chain amino acids (BCAA). Catalyzes an alkyl-migration followed by a ketol-acid reduction of (S)-2-acetolactate (S2AL) to yield (R)-2,3-dihydroxy-isovalerate. In the isomerase reaction, S2AL is rearranged via a Mg-dependent methyl migration to produce 3-hydroxy-3-methyl-2-ketobutyrate (HMKB). In the reductase reaction, this 2-ketoacid undergoes a metal-dependent reduction by NADPH to yield (R)-2,3-dihydroxy-isovalerate. In Caldivirga maquilingensis (strain ATCC 700844 / DSM 13496 / JCM 10307 / IC-167), this protein is Ketol-acid reductoisomerase (NADP(+)).